Consider the following 177-residue polypeptide: Large ribosomal subunit protein uL6 (177 aa).

This sequence belongs to the universal ribosomal protein uL6 family. Part of the 50S ribosomal subunit.

Its function is as follows. This protein binds to the 23S rRNA, and is important in its secondary structure. It is located near the subunit interface in the base of the L7/L12 stalk, and near the tRNA binding site of the peptidyltransferase center. The polypeptide is Large ribosomal subunit protein uL6 (Acidovorax ebreus (strain TPSY) (Diaphorobacter sp. (strain TPSY))).